The primary structure comprises 420 residues: S-adenosylmethionine synthase (420 aa).

Residue His16 coordinates ATP. Asp18 serves as a coordination point for Mg(2+). Position 44 (Glu44) interacts with K(+). The L-methionine site is built by Glu57 and Gln100. A flexible loop region spans residues Gln100–Lys110. ATP contacts are provided by residues Asp175–Lys177, Lys251–Phe252, Asp260, Arg266–Lys267, Ala283, and Lys287. Position 260 (Asp260) interacts with L-methionine. Lys291 is a binding site for L-methionine.

The protein belongs to the AdoMet synthase family. As to quaternary structure, homotetramer; dimer of dimers. Mg(2+) is required as a cofactor. Requires K(+) as cofactor.

The protein resides in the cytoplasm. The catalysed reaction is L-methionine + ATP + H2O = S-adenosyl-L-methionine + phosphate + diphosphate. It functions in the pathway amino-acid biosynthesis; S-adenosyl-L-methionine biosynthesis; S-adenosyl-L-methionine from L-methionine: step 1/1. Functionally, catalyzes the formation of S-adenosylmethionine (AdoMet) from methionine and ATP. The overall synthetic reaction is composed of two sequential steps, AdoMet formation and the subsequent tripolyphosphate hydrolysis which occurs prior to release of AdoMet from the enzyme. In Trichodesmium erythraeum (strain IMS101), this protein is S-adenosylmethionine synthase.